A 277-amino-acid polypeptide reads, in one-letter code: Tryptophan synthase alpha chain (277 aa).

Catalysis depends on proton acceptor residues E42 and E53.

This sequence belongs to the TrpA family. As to quaternary structure, tetramer of two alpha and two beta chains.

It carries out the reaction (1S,2R)-1-C-(indol-3-yl)glycerol 3-phosphate + L-serine = D-glyceraldehyde 3-phosphate + L-tryptophan + H2O. It participates in amino-acid biosynthesis; L-tryptophan biosynthesis; L-tryptophan from chorismate: step 5/5. Its function is as follows. The alpha subunit is responsible for the aldol cleavage of indoleglycerol phosphate to indole and glyceraldehyde 3-phosphate. The polypeptide is Tryptophan synthase alpha chain (Natronomonas pharaonis (strain ATCC 35678 / DSM 2160 / CIP 103997 / JCM 8858 / NBRC 14720 / NCIMB 2260 / Gabara) (Halobacterium pharaonis)).